The primary structure comprises 316 residues: MAMETQMSQNVCPRNLWLLQPLTVLLLLASADSQAAPPKAVLKLEPPWINVLQEDSVTLTCRGARSPESDSIQWFHNGNLIPTHTQPSYRFKANNNDSGEYTCQTGQTSLSDPVHLTVLSEWLVLQTPHLEFQEGETIVLRCHSWKDKPLVKVTFFQNGKSQKFSHLDPNLSIPQANHSHSGDYHCTGNIGYTLFSSKPVTITVQAPSVGSSSPVGIIVAVVIATAVAAIVAAVVALIYCRKKRISANSTDPVKAAQFEPPGRQMIAIRKRQLEETNNDYETADGGYMTLNPRAPTDDDKNIYLTLPPNDHVNSNN.

The first 35 residues, Met1 to Ala35, serve as a signal peptide directing secretion. At Ala36 to Gly216 the chain is on the extracellular side. Ig-like C2-type domains lie at Pro38–Thr117 and Glu121–Thr203. Intrachain disulfides connect Cys61–Cys103 and Cys142–Cys186. N-linked (GlcNAc...) asparagine glycans are attached at residues Asn96, Asn170, and Asn177. The chain crosses the membrane as a helical span at residues Ile217–Tyr239. Residues Cys240–Asn316 lie on the Cytoplasmic side of the membrane. Phosphotyrosine; by SRC-type Tyr-kinases occurs at positions 287 and 303.

As to quaternary structure, interacts with INPP5D/SHIP1 and INPPL1/SHIP2, regulating its function. Interacts with APCS and FGR. Interacts with HCK. Post-translationally, phosphorylated by SRC-type Tyr-kinases such as HCK, LYN, BLK, FYN and SYK.

The protein resides in the cell membrane. Functionally, binds to the Fc region of immunoglobulins gamma. Low affinity receptor. By binding to IgG it initiates cellular responses against pathogens and soluble antigens. Promotes phagocytosis of opsonized antigens. This Pan troglodytes (Chimpanzee) protein is Low affinity immunoglobulin gamma Fc region receptor II-a (FCGR2A).